A 330-amino-acid polypeptide reads, in one-letter code: Inactive hydroxysteroid dehydrogenase-like protein 1 (330 aa).

At Ala2 the chain carries N-acetylalanine. A required for mitochondria translocation region spans residues 2–82 (AAVDSFYLLY…SGATDGIGKA (81 aa)). NADP(+) contacts are provided by residues 74–80 (GATDGIG), Asp125, and Lys222.

This sequence belongs to the short-chain dehydrogenases/reductases (SDR) family. 17-beta-HSD 3 subfamily. As to quaternary structure, interacts with STYXL1.

Its subcellular location is the mitochondrion. The polypeptide is Inactive hydroxysteroid dehydrogenase-like protein 1 (Hsdl1) (Mus musculus (Mouse)).